The primary structure comprises 972 residues: Mast/stem cell growth factor receptor Kit (972 aa).

The N-terminal stretch at 1-25 (MRGARGAWDFLCVLLLLLRVQTGSS) is a signal peptide. Residues 26–520 (QPSVSPEEAS…QIQPHTLFTP (495 aa)) lie on the Extracellular side of the membrane. Ig-like C2-type domains lie at 27–112 (PSVS…VFVR), 121–205 (DRSL…LKVR), 212–308 (PVVS…LEVV), 317–410 (PMIN…VYVN), and 413–507 (PEIL…FNFA). Residues Cys58 and Cys97 are joined by a disulfide bond. Residues Asn130 and Asn145 are each glycosylated (N-linked (GlcNAc...) asparagine). Disulfide bonds link Cys136/Cys186, Cys151/Cys183, and Cys233/Cys290. 7 N-linked (GlcNAc...) asparagine glycosylation sites follow: Asn283, Asn300, Asn320, Asn352, Asn367, Asn463, and Asn486. The cysteines at positions 428 and 491 are disulfide-linked. Residues 521–541 (LLIGFVVVAGMMCIIVMILTY) traverse the membrane as a helical segment. At 542–972 (KYLQKPMYEV…SQPLLVRDDV (431 aa)) the chain is on the cytoplasmic side. Tyr543 and Tyr549 each carry phosphotyrosine. Tyr564 contributes to the Mg(2+) binding site. A phosphotyrosine; by autocatalysis mark is found at Tyr564 and Tyr566. Residues 564 to 566 (YVY) are important for interaction with phosphotyrosine-binding proteins. The Protein kinase domain maps to 585–933 (LSFGKTLGAG…ISESTNHIYS (349 aa)). ATP contacts are provided by residues 592–599 (GAGAFGKV), Lys619, and 667–673 (EYCCYGD). 2 positions are modified to phosphotyrosine; by autocatalysis: Tyr699 and Tyr717. Residue Tyr726 is modified to Phosphotyrosine. Ser737 and Ser742 each carry phosphoserine; by PKC/PRKCA. Asp788 functions as the Proton acceptor in the catalytic mechanism. Arg792 contacts ATP. Mg(2+) is bound by residues Asn793 and Asp806. Position 817 is a phosphoserine (Ser817). Tyr819 carries the phosphotyrosine; by autocatalysis modification. A Phosphoserine modification is found at Ser887. A Phosphotyrosine modification is found at Tyr896. Tyr932 is subject to Phosphotyrosine; by autocatalysis. Ser955 bears the Phosphoserine mark.

The protein belongs to the protein kinase superfamily. Tyr protein kinase family. CSF-1/PDGF receptor subfamily. In terms of assembly, monomer in the absence of bound KITLG/SCF. Homodimer in the presence of bound KITLG/SCF, forming a heterotetramer with two KITLG/SCF molecules. Interacts (via phosphorylated tyrosine residues) with the adapter proteins GRB2 and GRB7 (via SH2 domain), and SH2B2/APS. Interacts (via C-terminus) with MPDZ (via the tenth PDZ domain). Interacts (via phosphorylated tyrosine residues) with PIK3R1 and PIK3CD. Interacts (via phosphorylated tyrosine) with CRK (isoform Crk-II), FYN, SHC1 and MATK/CHK (via SH2 domain). Interacts with LYN and FES/FPS. Interacts (via phosphorylated tyrosine residues) with the protein phosphatases PTPN6/SHP-1 (via SH2 domain), PTPN11/SHP-2 (via SH2 domain) and PTPRU. Interacts with PLCG1. Interacts with DOK1 and TEC. Interacts with IL1RAP (independent of stimulation with KITLG/SCF). A mast cell-specific KITLG/SCF-induced interleukin-33 signaling complex contains IL1RL1, IL1RAP, KIT and MYD88. Post-translationally, ubiquitinated by SOCS6. KIT is rapidly ubiquitinated after autophosphorylation induced by KITLG/SCF binding, leading to internalization and degradation. Autophosphorylated on tyrosine residues. KITLG/SCF binding promotes autophosphorylation. Phosphorylated tyrosine residues are important for interaction with specific binding partners.

The protein resides in the cell membrane. The catalysed reaction is L-tyrosyl-[protein] + ATP = O-phospho-L-tyrosyl-[protein] + ADP + H(+). With respect to regulation, present in an inactive conformation in the absence of bound ligand. KITLG/SCF binding leads to dimerization and activation by autophosphorylation on tyrosine residues. Activity is down-regulated by PRKCA-mediated phosphorylation on serine residues. In terms of biological role, tyrosine-protein kinase that acts as a cell-surface receptor for the cytokine KITLG/SCF and plays an essential role in the regulation of cell survival and proliferation, hematopoiesis, stem cell maintenance, gametogenesis, mast cell development, migration and function, and in melanogenesis. In response to KITLG/SCF binding, KIT can activate several signaling pathways. Phosphorylates PIK3R1, PLCG1, SH2B2/APS and CBL. Activates the AKT1 signaling pathway by phosphorylation of PIK3R1, the regulatory subunit of phosphatidylinositol 3-kinase. Activated KIT also transmits signals via GRB2 and activation of RAS, RAF1 and the MAP kinases MAPK1/ERK2 and/or MAPK3/ERK1. Promotes activation of STAT family members STAT1, STAT3, STAT5A and STAT5B. Activation of PLCG1 leads to the production of the cellular signaling molecules diacylglycerol and inositol 1,4,5-trisphosphate. KIT signaling is modulated by protein phosphatases, and by rapid internalization and degradation of the receptor. Activated KIT promotes phosphorylation of the protein phosphatases PTPN6/SHP-1 and PTPRU, and of the transcription factors STAT1, STAT3, STAT5A and STAT5B. Promotes phosphorylation of PIK3R1, CBL, CRK (isoform Crk-II), LYN, MAPK1/ERK2 and/or MAPK3/ERK1, PLCG1, SRC and SHC1. The protein is Mast/stem cell growth factor receptor Kit (KIT) of Callithrix jacchus (White-tufted-ear marmoset).